The chain runs to 220 residues: Ribose-5-phosphate isomerase A (220 aa).

Residues 28-31 (TGST), 81-84 (DGAD), and 94-97 (KGGG) each bind substrate. Glu-103 functions as the Proton acceptor in the catalytic mechanism. Position 121 (Lys-121) interacts with substrate.

The protein belongs to the ribose 5-phosphate isomerase family. Homodimer.

It carries out the reaction aldehydo-D-ribose 5-phosphate = D-ribulose 5-phosphate. Its pathway is carbohydrate degradation; pentose phosphate pathway; D-ribose 5-phosphate from D-ribulose 5-phosphate (non-oxidative stage): step 1/1. Catalyzes the reversible conversion of ribose-5-phosphate to ribulose 5-phosphate. The polypeptide is Ribose-5-phosphate isomerase A (Vesicomyosocius okutanii subsp. Calyptogena okutanii (strain HA)).